Reading from the N-terminus, the 346-residue chain is N-acetyl-gamma-glutamyl-phosphate reductase (346 aa).

The active site involves cysteine 149.

The protein belongs to the NAGSA dehydrogenase family. Type 1 subfamily.

Its subcellular location is the cytoplasm. It catalyses the reaction N-acetyl-L-glutamate 5-semialdehyde + phosphate + NADP(+) = N-acetyl-L-glutamyl 5-phosphate + NADPH + H(+). The protein operates within amino-acid biosynthesis; L-arginine biosynthesis; N(2)-acetyl-L-ornithine from L-glutamate: step 3/4. Catalyzes the NADPH-dependent reduction of N-acetyl-5-glutamyl phosphate to yield N-acetyl-L-glutamate 5-semialdehyde. The protein is N-acetyl-gamma-glutamyl-phosphate reductase of Micrococcus luteus (strain ATCC 4698 / DSM 20030 / JCM 1464 / CCM 169 / CCUG 5858 / IAM 1056 / NBRC 3333 / NCIMB 9278 / NCTC 2665 / VKM Ac-2230) (Micrococcus lysodeikticus).